The chain runs to 199 residues: Inner membrane protein E199L (199 aa).

The chain crosses the membrane as a helical span at residues 150-170; it reads INVMNHPFLTLILIILILIII.

The protein belongs to the asfivirus E199L family. As to quaternary structure, interacts with host PYCR2; this interaction results in autophagy activation. In terms of processing, contains intramolecular disulfide bonds.

The protein resides in the virion membrane. It localises to the host membrane. In terms of biological role, essential for viral fusion with host endosomal membrane and core release. Not required for virus morphogenesis and egress. Induces complete autophagy through the interaction with and down-regulation of host PYCR2. The polypeptide is Inner membrane protein E199L (Ornithodoros (relapsing fever ticks)).